A 942-amino-acid polypeptide reads, in one-letter code: Lambda-carrageenase (942 aa).

The signal sequence occupies residues 1 to 25 (MKIKILSAMIASSLLIGCVIPTVKA).

As to quaternary structure, monomer.

It localises to the secreted. The enzyme catalyses Endohydrolysis of (1-&gt;4)-beta-linkages in the backbone of lambda-carrageenan, resulting in the tetrasaccharide alpha-D-Galp2,6S2-(1-&gt;3)-beta-D-Galp2S-(1-&gt;4)-alpha-D-Galp2,6S2-(1-&gt;3)-D-Galp2S.. Functionally, hydrolyzes lambda-carrageenan with inversion of anomeric configuration. Does not hydrolyze iota- and kappa-carrageenans, agarose or porphyran. In Pseudoalteromonas sp, this protein is Lambda-carrageenase.